Reading from the N-terminus, the 326-residue chain is Undecaprenyl-phosphate 4-deoxy-4-formamido-L-arabinose transferase (326 aa).

The next 2 membrane-spanning stretches (helical) occupy residues 235-255 (MLSVIGSMIALLGFAFSLLLI) and 270-290 (VFMLFAVLFIFIGAQFIGMGL).

This sequence belongs to the glycosyltransferase 2 family.

The protein localises to the cell inner membrane. It carries out the reaction UDP-4-deoxy-4-formamido-beta-L-arabinose + di-trans,octa-cis-undecaprenyl phosphate = 4-deoxy-4-formamido-alpha-L-arabinopyranosyl di-trans,octa-cis-undecaprenyl phosphate + UDP. It functions in the pathway glycolipid biosynthesis; 4-amino-4-deoxy-alpha-L-arabinose undecaprenyl phosphate biosynthesis; 4-amino-4-deoxy-alpha-L-arabinose undecaprenyl phosphate from UDP-4-deoxy-4-formamido-beta-L-arabinose and undecaprenyl phosphate: step 1/2. It participates in bacterial outer membrane biogenesis; lipopolysaccharide biosynthesis. Catalyzes the transfer of 4-deoxy-4-formamido-L-arabinose from UDP to undecaprenyl phosphate. The modified arabinose is attached to lipid A and is required for resistance to polymyxin and cationic antimicrobial peptides. In Sodalis glossinidius (strain morsitans), this protein is Undecaprenyl-phosphate 4-deoxy-4-formamido-L-arabinose transferase.